The chain runs to 222 residues: Oligoribonuclease (222 aa).

Residues 19 to 38 form a disordered region; that stretch reads PMASSSSTGKQEESVNGSLE. The segment covering 21 to 35 has biased composition (polar residues); it reads ASSSSTGKQEESVNG. The region spanning 46–210 is the Exonuclease domain; it reads LVWIDLEMTG…DDIRESIKEL (165 aa). H167 is an active-site residue.

The protein belongs to the oligoribonuclease family.

3'-to-5' exoribonuclease specific for small oligoribonucleotides. This chain is Oligoribonuclease, found in Arabidopsis thaliana (Mouse-ear cress).